Consider the following 99-residue polypeptide: DNA-binding protein Fis (99 aa).

Residues Gln-75–Lys-94 constitute a DNA-binding region (H-T-H motif).

Belongs to the transcriptional regulatory Fis family. As to quaternary structure, homodimer.

Activates ribosomal RNA transcription. Plays a direct role in upstream activation of rRNA promoters. This chain is DNA-binding protein Fis, found in Pasteurella multocida (strain Pm70).